The sequence spans 314 residues: PDZ domain-containing protein GIPC2 (314 aa).

Residues 1–12 are compositionally biased toward basic residues; that stretch reads MPLGLRGKKKAA. A disordered region spans residues 1 to 36; the sequence is MPLGLRGKKKAAKSKETARLVEGERSGGSQGVPGPP. Basic and acidic residues predominate over residues 13–25; that stretch reads KSKETARLVEGER. Positions 117-197 constitute a PDZ domain; that stretch reads EVNVYKSEDS…EELFTLQLIE (81 aa).

Belongs to the GIPC family. As to quaternary structure, probably interacts with SEMA5A.

Its subcellular location is the cytoplasm. This Rattus norvegicus (Rat) protein is PDZ domain-containing protein GIPC2 (Gipc2).